Reading from the N-terminus, the 285-residue chain is Alginate lyase (285 aa).

The signal sequence occupies residues 1-20 (MIKSNLVISSLAIVSSMSYA).

It belongs to the polysaccharide lyase 6 family.

The catalysed reaction is Eliminative cleavage of alginate to give oligosaccharides with 4-deoxy-alpha-L-erythro-hex-4-enuronosyl groups at their non-reducing ends and beta-D-mannuronate at their reducing end.. The sequence is that of Alginate lyase (alxM) from Photobacterium sp. (strain ATCC 43367).